The chain runs to 375 residues: Pulmonary surfactant-associated protein D (375 aa).

The signal sequence occupies residues 1-20 (MLLFLLSALVLLTQPLGYLE). An S-nitrosocysteine mark is found at Cys-35 and Cys-40. A disordered region spans residues 45-221 (SGLPGRDGRD…DKGAKGESGL (177 aa)). The 177-residue stretch at 46 to 222 (GLPGRDGRDG…KGAKGESGLP (177 aa)) folds into the Collagen-like domain. A compositionally biased stretch (basic and acidic residues) spans 50–65 (RDGRDGREGPRGEKGD). A compositionally biased stretch (low complexity) spans 66 to 86 (PGLPGAAGQAGMPGQAGPVGP). At Pro-78 the chain carries 4-hydroxyproline. 5-hydroxylysine is present on Lys-87. The N-linked (GlcNAc...) asparagine glycan is linked to Asn-90. Pro-96 is modified (4-hydroxyproline). Lys-99 bears the 5-hydroxylysine mark. Pro residues predominate over residues 105 to 114 (SGPPGPPGVP). 2 stretches are compositionally biased toward low complexity: residues 116 to 132 (PAGR…IGPQ) and 138 to 150 (KGEA…VGAP). Residues Pro-171 and Pro-177 each carry the 4-hydroxyproline modification. The segment covering 204-216 (KGDKGIPGDKGAK) has biased composition (basic and acidic residues). Residues 223 to 252 (DVASLRQQVEALQGQVQHLQAAFSQYKKVE) are a coiled coil. Residues 260–375 (VGEKIFKTAG…GEKRLVVCEF (116 aa)) enclose the C-type lectin domain. 2 disulfides stabilise this stretch: Cys-281–Cys-373 and Cys-351–Cys-365.

This sequence belongs to the SFTPD family. Oligomeric complex of 4 set of homotrimers. Post-translationally, the N-terminus is blocked. In terms of processing, hydroxylation on proline residues within the sequence motif, GXPG, is most likely to be 4-hydroxy as this fits the requirement for 4-hydroxylation in vertebrates. S-nitrosylation at Cys-35 and Cys-40 alters the quaternary structure which results in a pro-inflammatory chemoattractive signaling activity with macrophages. Expressed in lung, brain, pancreas and adipose tissue (mainly mature adipocytes).

The protein localises to the secreted. It is found in the extracellular space. The protein resides in the extracellular matrix. It localises to the surface film. Its function is as follows. Contributes to the lung's defense against inhaled microorganisms, organic antigens and toxins. Interacts with compounds such as bacterial lipopolysaccharides, oligosaccharides and fatty acids and modulates leukocyte action in immune response. May participate in the extracellular reorganization or turnover of pulmonary surfactant. Binds strongly maltose residues and to a lesser extent other alpha-glucosyl moieties. The protein is Pulmonary surfactant-associated protein D (SFTPD) of Homo sapiens (Human).